We begin with the raw amino-acid sequence, 348 residues long: tRNA pseudouridine synthase B (348 aa).

Catalysis depends on aspartate 52, which acts as the Nucleophile.

This sequence belongs to the pseudouridine synthase TruB family. Type 1 subfamily.

The enzyme catalyses uridine(55) in tRNA = pseudouridine(55) in tRNA. Responsible for synthesis of pseudouridine from uracil-55 in the psi GC loop of transfer RNAs. This chain is tRNA pseudouridine synthase B, found in Rhodopirellula baltica (strain DSM 10527 / NCIMB 13988 / SH1).